Here is a 131-residue protein sequence, read N- to C-terminus: Protein TIFY 5A (131 aa).

The short motif at 9–13 is the EAR element; that stretch reads LELRL. 2 disordered regions span residues 14–44 and 74–131; these read FPTS…EESQ and REMK…HSRR. Residues 16-34 are compositionally biased toward low complexity; it reads TSYDSDSSDTTSVVESTSS. Residues 39–74 form the Tify domain; the sequence is PNEESQRITIFYNGKMCFSSDVTHLQARSIISIASR. A compositionally biased stretch (polar residues) spans 79-100; that stretch reads KSSSNGSDPPNKSTSFHHNQLP. The Jas motif lies at 105-127; sequence SMKKSLQSFLQKRKIRIQATSPY. The short motif at 106 to 113 is the Nuclear localization signal element; the sequence is MKKSLQSF. Residues 122–131 show a composition bias toward polar residues; it reads QATSPYHSRR.

The protein belongs to the TIFY/JAZ family. As to quaternary structure, interacts with TPL and weakly with COI1, but not with AFPH2/NINJA. Interacts with MYC2, MYB21, MYB24, TIFY10A/JAZ1, TIFY10B/JAZ2, TIFY6B/JAZ3, TIFY6A/JAZ4, TIFY11A/JAZ5, TIFY11B/JAZ6, TIFY7/JAZ9, TIFY9/JAZ10 and TIFY3B/JAZ12. Interacts with RHD6 and RSL1. In terms of assembly, (Microbial infection) Interacts with the pathogenic Pseudomonas syringae HopZ1a protein. In terms of processing, (Microbial infection) Acetylated by Pseudomonas syringae HopZ1a. Post-translationally, ubiquitinated.

The protein localises to the nucleus. Repressor of jasmonate responses. Unable to associate strongly with COI1 in the presence of jasmonoyl-isoleucine (JA-Ile) and is therefore more resistant to JA-mediated-degradation than other TIFY/JAZ proteins. Repress gene expression through direct recruitment of the corepressor TOPLESS to cognate transcription factors. Interacts with and suppresses RHD6 and RSL1 transcription factor activities to negatively regulate jasmonate-stimulated root hair development. The protein is Protein TIFY 5A of Arabidopsis thaliana (Mouse-ear cress).